The following is a 352-amino-acid chain: Molybdenum import ATP-binding protein ModC (352 aa).

In terms of domain architecture, ABC transporter spans M1 to E229. G31–T38 provides a ligand contact to ATP. Residues Q289–A352 enclose the Mop domain.

It belongs to the ABC transporter superfamily. Molybdate importer (TC 3.A.1.8) family. In terms of assembly, the complex is composed of two ATP-binding proteins (ModC), two transmembrane proteins (ModB) and a solute-binding protein (ModA).

The protein resides in the cell inner membrane. The catalysed reaction is molybdate(out) + ATP + H2O = molybdate(in) + ADP + phosphate + H(+). Part of the ABC transporter complex ModABC involved in molybdenum import. Responsible for energy coupling to the transport system. This Shigella flexneri protein is Molybdenum import ATP-binding protein ModC.